A 408-amino-acid chain; its full sequence is MSRQINAATPSSSRRHRLSLSRRRINFTTSPEAQPSSSSRSQPSSSSRSHRRQERRQEQRVSEENVQIIGNVNEPLTRTYHRQGVTYYVHGQVNISNDDPLLSQEDDVILINSENVDRERFPDITAQQYQDNIASETAAQRALQRGLDLEAQLMNEIAPRSPTYSPSYSPNYVIPQSPDLFASPQSPQPQQQQQQQSEPEEEVEVSCNICFTTFKDTKNVNSSFVTSIHCNHAVCFKCYVKIIMDNSVYKCFCSATSSDCRVYNKHGYVEFMPINVTRNQDSIKQHWRELLENNTVNNHTTDLNYVEQLQKELSELRAKTSQVEHKMTMLNSDYIMLKHKHAVAELDLQKANYDLQESTKKSEELQSTVNNLQEQLRKQVAESQAKFSEFERSNSDLVSKLQTVMSRR.

Over residues M1 to P10 the composition is skewed to polar residues. 2 disordered regions span residues M1–Q67 and Q176–P199. Residues S13 to I25 are compositionally biased toward basic residues. Over residues S30–S47 the composition is skewed to low complexity. 4 repeat units span residues Q34 to S41, Q42 to S49, R51 to E54, and R55 to E58. The segment at Q34 to S49 is 2 X 8 AA tandem repeats of Q-P-S-S-S-S-R-S. Positions R51–E58 are 2 X 4 AA tandem repeats of R-R-Q-E. Positions S183–S197 are enriched in low complexity. Residues C207 to A255 form an RING-type zinc finger.

Belongs to the alphabaculovirus IE2 protein family. As to quaternary structure, homooligomer. In terms of processing, auto-ubiquitinated.

The protein localises to the host nucleus. It carries out the reaction S-ubiquitinyl-[E2 ubiquitin-conjugating enzyme]-L-cysteine + [acceptor protein]-L-lysine = [E2 ubiquitin-conjugating enzyme]-L-cysteine + N(6)-ubiquitinyl-[acceptor protein]-L-lysine.. Functionally, RING-finger E3 ubiquitin ligase that plays an important regulatory role during the initial stages of infection. Migrates to specific nuclear foci early in infection supposely to prepare the sites for viral transcription and replication by targeting and ubiquitinating host proteins. Acts as a transcriptional activator and activates a number of viral promoters including itself, IE1 and the promoter of 39K gene. This Lepidoptera (butterflies and moths) protein is E3 ubiquitin-protein ligase IE2 (IE2).